Reading from the N-terminus, the 329-residue chain is GTP 3',8-cyclase (329 aa).

The Radical SAM core domain occupies 8–234; that stretch reads AFARKFYYLR…QLRSRADGPA (227 aa). Arginine 17 contacts GTP. Cysteine 24 and cysteine 28 together coordinate [4Fe-4S] cluster. Tyrosine 30 serves as a coordination point for S-adenosyl-L-methionine. [4Fe-4S] cluster is bound at residue cysteine 31. Position 68 (arginine 68) interacts with GTP. Glycine 72 serves as a coordination point for S-adenosyl-L-methionine. Threonine 99 serves as a coordination point for GTP. Serine 123 serves as a coordination point for S-adenosyl-L-methionine. GTP is bound at residue lysine 160. Position 194 (methionine 194) interacts with S-adenosyl-L-methionine. [4Fe-4S] cluster is bound by residues cysteine 257 and cysteine 260. 262–264 contacts GTP; that stretch reads RLR. Cysteine 274 lines the [4Fe-4S] cluster pocket.

Belongs to the radical SAM superfamily. MoaA family. In terms of assembly, monomer and homodimer. The cofactor is [4Fe-4S] cluster.

It catalyses the reaction GTP + AH2 + S-adenosyl-L-methionine = (8S)-3',8-cyclo-7,8-dihydroguanosine 5'-triphosphate + 5'-deoxyadenosine + L-methionine + A + H(+). The protein operates within cofactor biosynthesis; molybdopterin biosynthesis. Catalyzes the cyclization of GTP to (8S)-3',8-cyclo-7,8-dihydroguanosine 5'-triphosphate. The polypeptide is GTP 3',8-cyclase (Cronobacter sakazakii (strain ATCC BAA-894) (Enterobacter sakazakii)).